The primary structure comprises 533 residues: Multicopper oxidase CueO (533 aa).

The segment at residues 1 to 28 is a signal peptide (tat-type signal); that stretch reads MHRRDFLKLTAALGAATSLPLWSRAALA. Plastocyanin-like domains follow at residues 53–166, 221–290, and 416–532; these read QTGS…IDDS, PYPQ…DTRD, and AFNF…FTVS. Residues histidine 102, histidine 104, histidine 142, and histidine 144 each contribute to the Cu cation site. Histidine 458, histidine 461, histidine 463, histidine 514, cysteine 515, histidine 516, and histidine 520 together coordinate Cu cation.

This sequence belongs to the multicopper oxidase family. Monomer. Requires Cu cation as cofactor. In terms of processing, predicted to be exported by the Tat system. The position of the signal peptide cleavage has not been experimentally proven.

It localises to the periplasm. It catalyses the reaction 4 Cu(+) + O2 + 4 H(+) = 4 Cu(2+) + 2 H2O. Functionally, multicopper oxidase involved in copper homeostasis and copper tolerance under aerobic conditions. Is responsible for the oxidation of Cu(+) to the less harmful Cu(2+) in the periplasm, thereby preventing Cu(+) from entering the cytoplasm. In Yersinia pestis, this protein is Multicopper oxidase CueO (cueO).